Consider the following 201-residue polypeptide: Recombination protein RecR (201 aa).

The C4-type zinc finger occupies 57–72 (CSDCRTFTEQDVCAIC). One can recognise a Toprim domain in the interval 81–176 (GQICVVESPA…MASRIAHGVP (96 aa)).

It belongs to the RecR family.

May play a role in DNA repair. It seems to be involved in an RecBC-independent recombinational process of DNA repair. It may act with RecF and RecO. This Pectobacterium carotovorum subsp. carotovorum (strain PC1) protein is Recombination protein RecR.